The following is a 294-amino-acid chain: Ribosomal RNA small subunit methyltransferase H (294 aa).

Residues 40 to 42, aspartate 59, phenylalanine 86, aspartate 102, and glutamine 109 each bind S-adenosyl-L-methionine; that span reads GGH.

Belongs to the methyltransferase superfamily. RsmH family.

It is found in the cytoplasm. It carries out the reaction cytidine(1402) in 16S rRNA + S-adenosyl-L-methionine = N(4)-methylcytidine(1402) in 16S rRNA + S-adenosyl-L-homocysteine + H(+). In terms of biological role, specifically methylates the N4 position of cytidine in position 1402 (C1402) of 16S rRNA. This is Ribosomal RNA small subunit methyltransferase H from Cyanothece sp. (strain PCC 7425 / ATCC 29141).